Reading from the N-terminus, the 423-residue chain is MSFCDDREGQRALRILQARLIRSPDACSFALTAVSSLLRKYSIDPRRIGRLEVGTESLVDKSKSIKSFVMQLFEESGNFDIEGVDTVNACYGGTNALFNAVNWVESSAWDGRDAIVVASDISLYGKGNARPTGGAGCVAMLVGPDAPIAFEPGRRGSYMAHTYDFYKPDFTTEYPYINGKHSIECYIQAVEACYRAYTKRERRATERLEEERPDHQAGYETPLDRFDYLCFHSPTNKLVSKSYARLLYVDYLENPANPIFAEVPDSIREVEYRASLTDKSIEKTFMGLAQERFARCVQPSTEIPNMCGNMYSASVYGSLCSLLCNVNSETLLGKRITIFSYGSGLASSMFSLKVRGSTKQMAEKLDVHRRLVDRVVVSPEDVRERAYLKKCFKPKGGAGPIPADVYSLAEVDELFRRVYTVKS.

It belongs to the thiolase-like superfamily. HMG-CoA synthase family.

Its pathway is mycotoxin biosynthesis. Hydroxymethylglutaryl-CoA synthase-like protein; part of the gene clusters that mediate the biosynthesis of the host-selective toxins (HSTs) AK-toxins responsible for Japanese pear black spot disease by the Japanese pear pathotype. AK-toxins are esters of 9,10-epoxy 8-hydroxy 9-methyldecatrienoic acid (EDA). On cellular level, AK-toxins affect plasma membrane of susceptible cells and cause a sudden increase in loss of K(+) after a few minutes of toxin treatment. The acyl-CoA ligase AKT1, the hydrolase AKT2 and enoyl-CoA hydratase AKT3 are all involved in the biosynthesis of the AK-, AF- and ACT-toxin common 9,10-epoxy-8-hydroxy-9-methyl-decatrienoic acid (EDA) structural moiety. Part of the EDA biosynthesis occurs in the peroxisome since these 3 enzymes are localized in peroxisomes. The exact roles of the 3 enzymes, as well as of additional AK-toxin clusters enzymes, including AKT4, AKT6 and AKTS1, have still to be elucidated. The Cytochrome P450 monooxygenase AKT7 on the other side functions to limit production of EDA and AK-toxin, probably via the catalysis of a side reaction of EDA or its precursor. This chain is Hydroxymethylglutaryl-CoA synthase-like protein AKT4-1, found in Alternaria alternata (Alternaria rot fungus).